Reading from the N-terminus, the 340-residue chain is DNA repair protein RAD51 homolog A (340 aa).

Positions 1–14 (MSSAAQQQQKAAAA) are enriched in low complexity. The interval 1–21 (MSSAAQQQQKAAAAEQEEVEH) is disordered. In terms of domain architecture, HhH spans 49–78 (TVEAVAYTPRKDLLQIKGISEAKADKIIEA). ATP is bound at residue 128–135 (GEFRSGKT).

The protein belongs to the RecA family. RAD51 subfamily. Self-associates and may interact with XRCC3 homolog. In terms of tissue distribution, highly expressed in mitotic and meiotic tissues, but low levels in differentiated tissues.

It localises to the nucleus. Functionally, binds to single and double-stranded DNA and exhibits DNA-dependent ATPase activity. Unwinds duplex DNA. Component of the meiotic recombination pathway. Seems to play a role in mediating chromosome homology search, chromosome pairing and synapsis at early stages and probably chromosome crossing-over at later stages in meiosis. Probably is involved in the repair of meiotic double strand breaks (DBSs) and in homologous recombination. In Zea mays (Maize), this protein is DNA repair protein RAD51 homolog A (RAD51A).